Reading from the N-terminus, the 451-residue chain is MSTSHGYRASWWTYILHQVPHTNFQFEVVDNQFAPQEWSYQQALLFLASIAGLCLAISLVLICVYLIKFCCCASQEDDDSKSHRVCCVTWSCVAAVIICCAGIGIGFYGNSETNDGVYQVTYSLMNANHTLTSINLLVSDTVELLSSVVKSDLTQLEEIFSTRTEFVVMIRNTRRQVESVAQQLTEISSFFWKGAELNPSALAEQVNFIEDYRWLAYILLLLLDLIICLFTLLSLAKQIKWLVIVMTVVSFFVLLLSWGSMGLEMATAVGLSDFCSDPDAYVMNQTQMITNINPDILQYYISCNQDVTNPFRQRLTMSQRALSNIHSQLHGLEREAVPQFPTAERNVLVVQGMLNTTEGNFHHLVALLNCRGLHKDYVDALKGLCYDGMEGILFLLLFSFLSALSFTAAVCSLPRAWKRFRNRDLDYDDMDEDDPFNPQESKRFVQWQSSI.

At 1–43 the chain is on the extracellular side; it reads MSTSHGYRASWWTYILHQVPHTNFQFEVVDNQFAPQEWSYQQA. A helical transmembrane segment spans residues 44–64; sequence LLFLASIAGLCLAISLVLICV. At 65–86 the chain is on the cytoplasmic side; the sequence is YLIKFCCCASQEDDDSKSHRVC. The chain crosses the membrane as a helical span at residues 87–107; the sequence is CVTWSCVAAVIICCAGIGIGF. Over 108 to 214 the chain is Extracellular; the sequence is YGNSETNDGV…QVNFIEDYRW (107 aa). Asparagine 128 carries N-linked (GlcNAc...) asparagine glycosylation. A helical membrane pass occupies residues 215 to 235; that stretch reads LAYILLLLLDLIICLFTLLSL. The Cytoplasmic portion of the chain corresponds to 236 to 240; it reads AKQIK. A helical transmembrane segment spans residues 241-261; that stretch reads WLVIVMTVVSFFVLLLSWGSM. The Extracellular portion of the chain corresponds to 262-390; it reads GLEMATAVGL…LKGLCYDGME (129 aa). Intrachain disulfides connect cysteine 275–cysteine 385 and cysteine 303–cysteine 370. Asparagine 284 and asparagine 355 each carry an N-linked (GlcNAc...) asparagine glycan. A helical transmembrane segment spans residues 391-411; that stretch reads GILFLLLFSFLSALSFTAAVC. Residues 412–451 are Cytoplasmic-facing; that stretch reads SLPRAWKRFRNRDLDYDDMDEDDPFNPQESKRFVQWQSSI.

This sequence belongs to the tweety family. Homotetramer; disulfide-linked. Homodimer.

It localises to the cell membrane. The catalysed reaction is chloride(in) = chloride(out). It catalyses the reaction L-glutamate(out) = L-glutamate(in). In terms of biological role, may act as a calcium-independent, swelling-dependent volume-regulated anion channel (VRAC-swell) which plays a pivotal role in the process of regulatory volume decrease (RVD) in the brain through the efflux of anions like chloride and organic osmolytes like glutamate. This Xenopus laevis (African clawed frog) protein is Protein tweety homolog 1-B (ttyh1-b).